Consider the following 377-residue polypeptide: Nitric oxide reductase FlRd-NAD(+) reductase (377 aa).

Belongs to the FAD-dependent oxidoreductase family. FAD is required as a cofactor.

Its subcellular location is the cytoplasm. The catalysed reaction is 2 reduced [nitric oxide reductase rubredoxin domain] + NAD(+) + H(+) = 2 oxidized [nitric oxide reductase rubredoxin domain] + NADH. It participates in nitrogen metabolism; nitric oxide reduction. One of at least two accessory proteins for anaerobic nitric oxide (NO) reductase. Reduces the rubredoxin moiety of NO reductase. The chain is Nitric oxide reductase FlRd-NAD(+) reductase from Salmonella schwarzengrund (strain CVM19633).